Reading from the N-terminus, the 266-residue chain is Pre-mRNA-splicing factor CWC26 (266 aa).

2 disordered regions span residues 1–37 (MALH…DKTS) and 118–149 (TRKT…KYED). The span at 16–26 (PKNKTKKKKKE) shows a compositional bias: basic residues. Basic and acidic residues predominate over residues 122–149 (IYRDAQGHKIQEDSKIDDSSFSRSKYED).

Belongs to the CWC26 family. In terms of assembly, belongs to the pre-mRNA retention and splicing (RES) complex composed of at least BUD13, IST3 and PML1. May also belong to the CWC complex (or CEF1-associated complex) composed of the U2, U5 and U6 snRNAs and at least BUD13, BUD31, BRR2, CDC40, CEF1, CLF1, CUS1, CWC2, CWC15, CWC21, CWC22, CWC23, CWC24, CWC25, CWC27, ECM2, HSH155, IST3, ISY1, LEA1, MSL1, NTC20, PRP8, PRP9, PRP11, PRP19, PRP21, PRP22, PRP45, PRP46, SLU7, SMB1, SMD1, SMD2, SMD3, SMX2, SMX3, SNT309, SNU114, SPP2, SYF1, SYF2, RSE1 and YJU2. Interacts with IST3 and PML1.

The protein resides in the cytoplasm. It localises to the nucleus. Required for efficient splicing and pre-mRNA nuclear retention. May also be involved in positioning the proximal bud pole signal. The sequence is that of Pre-mRNA-splicing factor CWC26 (BUD13) from Saccharomyces cerevisiae (strain ATCC 204508 / S288c) (Baker's yeast).